The following is a 160-amino-acid chain: 2-C-methyl-D-erythritol 2,4-cyclodiphosphate synthase (160 aa).

Asp-11 and His-13 together coordinate a divalent metal cation. Residues 11–13 (DVH) and 37–38 (HS) each bind 4-CDP-2-C-methyl-D-erythritol 2-phosphate. His-45 is a binding site for a divalent metal cation. Residues 59–61 (DIG), 64–68 (FPDTD), 103–109 (AQAPKMA), 135–138 (TTTE), Phe-142, and Arg-145 contribute to the 4-CDP-2-C-methyl-D-erythritol 2-phosphate site.

Belongs to the IspF family. Homotrimer. A divalent metal cation is required as a cofactor.

The catalysed reaction is 4-CDP-2-C-methyl-D-erythritol 2-phosphate = 2-C-methyl-D-erythritol 2,4-cyclic diphosphate + CMP. It participates in isoprenoid biosynthesis; isopentenyl diphosphate biosynthesis via DXP pathway; isopentenyl diphosphate from 1-deoxy-D-xylulose 5-phosphate: step 4/6. Functionally, involved in the biosynthesis of isopentenyl diphosphate (IPP) and dimethylallyl diphosphate (DMAPP), two major building blocks of isoprenoid compounds. Catalyzes the conversion of 4-diphosphocytidyl-2-C-methyl-D-erythritol 2-phosphate (CDP-ME2P) to 2-C-methyl-D-erythritol 2,4-cyclodiphosphate (ME-CPP) with a corresponding release of cytidine 5-monophosphate (CMP). The polypeptide is 2-C-methyl-D-erythritol 2,4-cyclodiphosphate synthase (Thioalkalivibrio sulfidiphilus (strain HL-EbGR7)).